Reading from the N-terminus, the 145-residue chain is Mannitol-specific phosphotransferase enzyme IIA component (145 aa).

Residues 4 to 143 (TILSTETIKV…QEVLAFLGEV (140 aa)) form the PTS EIIA type-2 domain. His-64 serves as the catalytic Tele-phosphohistidine intermediate. Position 64 is a phosphohistidine; by HPr (His-64).

It is found in the cytoplasm. In terms of biological role, the phosphoenolpyruvate-dependent sugar phosphotransferase system (sugar PTS), a major carbohydrate active transport system, catalyzes the phosphorylation of incoming sugar substrates concomitantly with their translocation across the cell membrane. The enzyme II CmtAB PTS system is involved in D-mannitol transport. This is Mannitol-specific phosphotransferase enzyme IIA component (mtlF) from Halalkalibacterium halodurans (strain ATCC BAA-125 / DSM 18197 / FERM 7344 / JCM 9153 / C-125) (Bacillus halodurans).